A 641-amino-acid polypeptide reads, in one-letter code: Soluble starch synthase 1, chloroplastic/amyloplastic (641 aa).

K145 lines the ADP-alpha-D-glucose pocket.

It belongs to the glycosyltransferase 1 family. Bacterial/plant glycogen synthase subfamily. As to expression, high expression in leaves and very low in tubers.

It is found in the plastid. The protein resides in the chloroplast. The protein localises to the amyloplast. The catalysed reaction is [(1-&gt;4)-alpha-D-glucosyl](n) + ADP-alpha-D-glucose = [(1-&gt;4)-alpha-D-glucosyl](n+1) + ADP + H(+). The protein operates within glycan biosynthesis; starch biosynthesis. Plays a minor role in starch synthesis in storage organs (tubers), but may contribute to the deposition of transient starch in chloroplasts of leaves. This chain is Soluble starch synthase 1, chloroplastic/amyloplastic, found in Solanum tuberosum (Potato).